A 314-amino-acid polypeptide reads, in one-letter code: Malate dehydrogenase (314 aa).

NAD(+) is bound by residues 11–16 and D35; that span reads GSGNIG. Substrate contacts are provided by R84 and R90. Residues N97 and 120–122 each bind NAD(+); that span reads ITN. Substrate contacts are provided by N122 and R153. Residue H177 is the Proton acceptor of the active site.

This sequence belongs to the LDH/MDH superfamily. MDH type 3 family.

The catalysed reaction is (S)-malate + NAD(+) = oxaloacetate + NADH + H(+). Catalyzes the reversible oxidation of malate to oxaloacetate. The chain is Malate dehydrogenase from Rickettsia prowazekii (strain Madrid E).